The sequence spans 396 residues: Phosphoglycerate kinase (396 aa).

Substrate is bound by residues 22-24 (DLN), Arg-37, 60-63 (HFGR), Arg-118, and Arg-151. Residues Lys-201, Glu-323, and 353–356 (GGDT) each bind ATP.

The protein belongs to the phosphoglycerate kinase family. In terms of assembly, monomer.

It localises to the cytoplasm. The enzyme catalyses (2R)-3-phosphoglycerate + ATP = (2R)-3-phospho-glyceroyl phosphate + ADP. It functions in the pathway carbohydrate degradation; glycolysis; pyruvate from D-glyceraldehyde 3-phosphate: step 2/5. In Azorhizobium caulinodans (strain ATCC 43989 / DSM 5975 / JCM 20966 / LMG 6465 / NBRC 14845 / NCIMB 13405 / ORS 571), this protein is Phosphoglycerate kinase.